The sequence spans 132 residues: Fatty acid-binding protein, brain (132 aa).

V2 carries the post-translational modification N-acetylvaline. 127–129 (RHY) serves as a coordination point for a fatty acid.

The protein belongs to the calycin superfamily. Fatty-acid binding protein (FABP) family. In terms of assembly, monomer.

It localises to the cytoplasm. Its function is as follows. FABPs are thought to play a role in the intracellular transport of long-chain fatty acids and their acyl-CoA esters. Binds oleic and palmitic acids but not palmitoyl CoA. This chain is Fatty acid-binding protein, brain (FABP7), found in Bos taurus (Bovine).